A 230-amino-acid chain; its full sequence is Ribonuclease HII (230 aa).

The 190-residue stretch at 28-217 (FRIAGIDEAG…VKEHLPSQPD (190 aa)) folds into the RNase H type-2 domain. A divalent metal cation-binding residues include Asp-34, Glu-35, and Asp-126. Positions 209–230 (KEHLPSQPDSDTAGPSTGLFSF) are disordered. Positions 215–230 (QPDSDTAGPSTGLFSF) are enriched in polar residues.

This sequence belongs to the RNase HII family. Mn(2+) is required as a cofactor. It depends on Mg(2+) as a cofactor.

Its subcellular location is the cytoplasm. It carries out the reaction Endonucleolytic cleavage to 5'-phosphomonoester.. In terms of biological role, endonuclease that specifically degrades the RNA of RNA-DNA hybrids. In Citrifermentans bemidjiense (strain ATCC BAA-1014 / DSM 16622 / JCM 12645 / Bem) (Geobacter bemidjiensis), this protein is Ribonuclease HII.